The following is a 152-amino-acid chain: Protein-export protein SecB (152 aa).

It belongs to the SecB family. As to quaternary structure, homotetramer, a dimer of dimers. One homotetramer interacts with 1 SecA dimer.

It is found in the cytoplasm. In terms of biological role, one of the proteins required for the normal export of preproteins out of the cell cytoplasm. It is a molecular chaperone that binds to a subset of precursor proteins, maintaining them in a translocation-competent state. It also specifically binds to its receptor SecA. The sequence is that of Protein-export protein SecB from Rickettsia peacockii (strain Rustic).